The chain runs to 492 residues: MKYKDLRDFLTLLEQRGELKRIKQEIDPHLEMTEIADRTLRAGGPALLFENPKGFDIPVLCNLFGTPKRVAMGMGQEQVSALRDVGKLLAFLKEPEPPKGFKDFLSSIPQFKQVLNMPTKVLGKADCQQVVLKDEDVDLYKLPIMQCWKEDVAPLVTWGLTITKGPLKKRQNLGIYRQQLVAKNKLIMRWLSHRGGALDFQEWKETHPGEPFPVSVALGADPATILGAVTPVPDTLSEYAFAGLLRGTKTSVVKSVSNDLEVPASAEIVLEGYIDPNETALEGPYGDHTGYYNEQEYFPVFTVTHITMRKDPIYHSTYTGRPPDEPAVLGEALNEVFIPILQKQFPEIVDFYLPPEGCSYRLAVVTIKKQYAGHAKRVMMGVWSFLRQFMYTKFVIVCDDDVNARDWKDVIWAMTTRCDPARDLTLVENTPIDYLDFASPVAGLGSKMGIDATNKWPGETQREWGVPIKKDPDVVKRVDEIWDSLAIFENEP.

N172 lines the Mn(2+) pocket. Prenylated FMN-binding positions include 175 to 177, 189 to 191, and 194 to 195; these read IYR, RWL, and RG. E238 is a binding site for Mn(2+). D287 functions as the Proton donor in the catalytic mechanism.

This sequence belongs to the UbiD family. In terms of assembly, homohexamer. Requires prenylated FMN as cofactor. Mn(2+) serves as cofactor.

The protein localises to the cell membrane. It catalyses the reaction a 4-hydroxy-3-(all-trans-polyprenyl)benzoate + H(+) = a 2-(all-trans-polyprenyl)phenol + CO2. It participates in cofactor biosynthesis; ubiquinone biosynthesis. Catalyzes the decarboxylation of 3-octaprenyl-4-hydroxy benzoate to 2-octaprenylphenol, an intermediate step in ubiquinone biosynthesis. This Pasteurella multocida (strain Pm70) protein is 3-octaprenyl-4-hydroxybenzoate carboxy-lyase.